The chain runs to 159 residues: Peptide deformylase (159 aa).

Fe cation contacts are provided by Cys88 and His130. Glu131 is an active-site residue. His134 contributes to the Fe cation binding site.

This sequence belongs to the polypeptide deformylase family. It depends on Fe(2+) as a cofactor.

The enzyme catalyses N-terminal N-formyl-L-methionyl-[peptide] + H2O = N-terminal L-methionyl-[peptide] + formate. Functionally, removes the formyl group from the N-terminal Met of newly synthesized proteins. Requires at least a dipeptide for an efficient rate of reaction. N-terminal L-methionine is a prerequisite for activity but the enzyme has broad specificity at other positions. This Caldanaerobacter subterraneus subsp. tengcongensis (strain DSM 15242 / JCM 11007 / NBRC 100824 / MB4) (Thermoanaerobacter tengcongensis) protein is Peptide deformylase.